Consider the following 80-residue polypeptide: RNA-binding protein Hfq (80 aa).

A Sm domain is found at 10-70; the sequence is DAFLNQVRKE…ISTISPLRPV (61 aa).

The protein belongs to the Hfq family. Homohexamer.

Functionally, RNA chaperone that binds small regulatory RNA (sRNAs) and mRNAs to facilitate mRNA translational regulation in response to envelope stress, environmental stress and changes in metabolite concentrations. Also binds with high specificity to tRNAs. The polypeptide is RNA-binding protein Hfq (Desulforamulus reducens (strain ATCC BAA-1160 / DSM 100696 / MI-1) (Desulfotomaculum reducens)).